We begin with the raw amino-acid sequence, 800 residues long: Internalin A (800 aa).

A signal peptide spans 1-35 (MRKKRYVWLKSILVAILVFGSGVWINTSNGTNAQA). The LRRNT domain occupies 36-76 (ATITQDTPINQIFTDAALAEKMKTVLGKTNVTDTVSQTDLD). LRR repeat units follow at residues 77 to 98 (QVTT…EYLN), 99 to 120 (NLTQ…KDLT), 121 to 142 (KLVD…ANLT), 143 to 164 (NLTG…KNLT), 165 to 186 (NLNR…SGLT), 187 to 207 (NLQQ…ANLT), 208 to 229 (TLER…AKLT), 230 to 251 (NLES…GILT), 252 to 273 (NLDE…ASLT), 274 to 295 (NLTD…SGLT), 296 to 317 (KLTE…AGLT), 318 to 339 (ALTN…SNLK), 340 to 361 (NLTY…SSLT), 362 to 383 (KLQR…ANLT), and 384 to 405 (NINW…ANLT). The region spanning 416-505 (AWTNAPVNYK…AIFNAKFHVD (90 aa)) is the LRRCT domain. One copy of the B-1 repeat lies at 518-587 (LLTEPAKPVK…TTSQTVDYQG (70 aa)). The 3 X approximate tandem repeats, type B stretch occupies residues 518–706 (LLTEPAKPVK…ITLYAQFTKN (189 aa)). A B-2 repeat occupies 588-657 (LLQEPTPPTK…STTQAVDYQG (70 aa)). One copy of the B-3 repeat lies at 658–706 (LLKEPKAPTKAGYTFKGWYDEKTDGKKWDFATDKMPANDITLYAQFTKN). Positions 705 to 757 (KNPVAPPTTGGNTPPTTNNGGNTTPPSANIPGSDTSNTSTGNSASTTSTMNAY) are disordered. Positions 711–753 (PTTGGNTPPTTNNGGNTTPPSANIPGSDTSNTSTGNSASTTST) are enriched in low complexity. Residues 767-771 (LPTTG) carry the LPXTG sorting signal motif. Thr770 carries the pentaglycyl murein peptidoglycan amidated threonine modification. A propeptide spans 771-800 (GDSDNALYLLLGLLAVGTAMALTKKARASK) (removed by sortase A).

It belongs to the internalin family.

Its subcellular location is the secreted. The protein localises to the cell wall. In terms of biological role, mediates the entry of Listeria monocytogenes into cells. Binds to host receptor cadherin-1 (E-cadherin, CDH1). This is Internalin A (inlA) from Listeria monocytogenes serotype 1/2a (strain 10403S).